Reading from the N-terminus, the 428-residue chain is Adenylosuccinate synthetase (428 aa).

Residues 12 to 18 (GDEGKGK) and 40 to 42 (GHT) contribute to the GTP site. The active-site Proton acceptor is the Asp13. Mg(2+) is bound by residues Asp13 and Gly40. IMP contacts are provided by residues 13–16 (DEGK), 38–41 (NAGH), Thr128, Arg142, Gln223, Thr238, and Arg302. Catalysis depends on His41, which acts as the Proton donor. A substrate-binding site is contributed by 298 to 304 (TTTGRPR). Residues Arg304, 330 to 332 (KLD), and 412 to 414 (GVG) contribute to the GTP site.

This sequence belongs to the adenylosuccinate synthetase family. In terms of assembly, homodimer. The cofactor is Mg(2+).

Its subcellular location is the cytoplasm. It carries out the reaction IMP + L-aspartate + GTP = N(6)-(1,2-dicarboxyethyl)-AMP + GDP + phosphate + 2 H(+). It functions in the pathway purine metabolism; AMP biosynthesis via de novo pathway; AMP from IMP: step 1/2. Functionally, plays an important role in the de novo pathway of purine nucleotide biosynthesis. Catalyzes the first committed step in the biosynthesis of AMP from IMP. The sequence is that of Adenylosuccinate synthetase from Kineococcus radiotolerans (strain ATCC BAA-149 / DSM 14245 / SRS30216).